Consider the following 197-residue polypeptide: Probable GTP-binding protein EngB (197 aa).

The 173-residue stretch at 25–197 (SAPEIAFAGR…VRDEFFKFTR (173 aa)) folds into the EngB-type G domain. GTP is bound by residues 33–40 (GRSNVGKS), 60–64 (GCTRQ), 79–82 (DLPG), 146–149 (TKID), and 177–179 (ISI). 2 residues coordinate Mg(2+): Ser40 and Thr62.

Belongs to the TRAFAC class TrmE-Era-EngA-EngB-Septin-like GTPase superfamily. EngB GTPase family. Requires Mg(2+) as cofactor.

Necessary for normal cell division and for the maintenance of normal septation. The polypeptide is Probable GTP-binding protein EngB (Wolbachia pipientis subsp. Culex pipiens (strain wPip)).